Consider the following 463-residue polypeptide: Mitochondrial dynamics protein MID49 (463 aa).

The Mitochondrial intermembrane portion of the chain corresponds to 1–24 (MAELQIRKKEKKSGDGIGTMVDFL). A helical membrane pass occupies residues 25–47 (LANARLVLGVGGAAMLGIATLAV). The Cytoplasmic portion of the chain corresponds to 48 to 463 (KRLIDRATSP…EPDDVLKRER (416 aa)). The segment at 87–119 (TLRRKEDLEHHCAPLSLPDPSQKMPEATGTSQV) is disordered. Over residues 89 to 98 (RRKEDLEHHC) the composition is skewed to basic and acidic residues.

This sequence belongs to the MID49/MID51 family.

The protein localises to the mitochondrion outer membrane. Its function is as follows. Mitochondrial outer membrane protein which regulates mitochondrial organization. It is required for mitochondrial fission and promotes the recruitment and association of the fission mediator dynamin-related protein 1 (DNM1L) to the mitochondrial surface independently of the mitochondrial fission FIS1 and MFF proteins. Regulates DNM1L GTPase activity. The polypeptide is Mitochondrial dynamics protein MID49 (mief2) (Xenopus laevis (African clawed frog)).